Reading from the N-terminus, the 290-residue chain is uncharacterized protein (290 aa).

2 disordered regions span residues 1–98 (MLGQ…SRRV) and 209–236 (LSGQ…AATT). The segment covering 63 to 76 (KPDRVRPGQRDRIG) has biased composition (basic and acidic residues). Positions 87-97 (AGQARAASSRR) are enriched in low complexity. A helical membrane pass occupies residues 261-281 (CILTALLAVSFHSIGVVIMTS).

The protein resides in the membrane. This is an uncharacterized protein from Homo sapiens (Human).